Reading from the N-terminus, the 874-residue chain is Probable inorganic carbon transporter subunit DabA (874 aa).

Residues C398, D400, H580, and C595 each contribute to the Zn(2+) site.

It belongs to the inorganic carbon transporter (TC 9.A.2) DabA family. Forms a complex with DabB. Zn(2+) is required as a cofactor.

The protein localises to the cell membrane. In terms of biological role, part of an energy-coupled inorganic carbon pump. The polypeptide is Probable inorganic carbon transporter subunit DabA (Bacillus anthracis (strain A0248)).